Reading from the N-terminus, the 225-residue chain is Cytidylate kinase (225 aa).

An ATP-binding site is contributed by 10-18; the sequence is GPASSGKST.

It belongs to the cytidylate kinase family. Type 1 subfamily.

It is found in the cytoplasm. The enzyme catalyses CMP + ATP = CDP + ADP. It catalyses the reaction dCMP + ATP = dCDP + ADP. The protein is Cytidylate kinase of Streptococcus gordonii (strain Challis / ATCC 35105 / BCRC 15272 / CH1 / DL1 / V288).